The following is a 221-amino-acid chain: GTPase Obg (221 aa).

The OBG-type G domain maps to 1–61 (PSALRLVLLN…LKYKLLEIVQ (61 aa)). Residues 10–13 (NKAD) and 42–44 (SAV) each bind GTP. The region spanning 82-162 (VVHRTKGQFQ…IGGISFEWEP (81 aa)) is the OCT domain.

The protein belongs to the TRAFAC class OBG-HflX-like GTPase superfamily. OBG GTPase family. Monomer. The cofactor is Mg(2+).

It is found in the cytoplasm. Functionally, an essential GTPase which binds GTP, GDP and possibly (p)ppGpp with moderate affinity, with high nucleotide exchange rates and a fairly low GTP hydrolysis rate. Plays a role in control of the cell cycle, stress response, ribosome biogenesis and in those bacteria that undergo differentiation, in morphogenesis control. The polypeptide is GTPase Obg (Corynebacterium melassecola).